We begin with the raw amino-acid sequence, 329 residues long: Ethylene-responsive transcription factor ERF117 (329 aa).

2 disordered regions span residues 25 to 51 and 71 to 90; these read DATD…KPPK and NSTG…FKGV. Residues 71 to 86 are compositionally biased toward polar residues; the sequence is NSTGNKAAGNRKTSSG. Residues 86–143 constitute a DNA-binding region (AP2/ERF); the sequence is GFKGVRRRPWGKFAAEIRNPFEKKRKWLGTFPTEEEAAEAYQKSKREFDERLGLVKQE.

It belongs to the AP2/ERF transcription factor family. ERF subfamily.

The protein resides in the nucleus. Functionally, probably acts as a transcriptional activator. Binds to the GCC-box pathogenesis-related promoter element. May be involved in the regulation of gene expression by stress factors and by components of stress signal transduction pathways. The sequence is that of Ethylene-responsive transcription factor ERF117 (ERF117) from Arabidopsis thaliana (Mouse-ear cress).